Reading from the N-terminus, the 118-residue chain is MNILDALDAQSKRTDLPDFRAGDTVKVHARVVEGNRSRVQIFQGVVIRRQGDGLRETFLVRKISFGVGVERTYPVNSPAIDRIEVVTRGDVRRAKLYYLRELRGKKAKIKEKREKQPS.

This sequence belongs to the bacterial ribosomal protein bL19 family.

Its function is as follows. This protein is located at the 30S-50S ribosomal subunit interface and may play a role in the structure and function of the aminoacyl-tRNA binding site. The polypeptide is Large ribosomal subunit protein bL19 (Salinispora tropica (strain ATCC BAA-916 / DSM 44818 / JCM 13857 / NBRC 105044 / CNB-440)).